The following is a 427-amino-acid chain: Trigger factor (427 aa).

The PPIase FKBP-type domain occupies 163 to 248 (GDVVNLDFDG…INEVKSKEVP (86 aa)).

Belongs to the FKBP-type PPIase family. Tig subfamily.

Its subcellular location is the cytoplasm. It catalyses the reaction [protein]-peptidylproline (omega=180) = [protein]-peptidylproline (omega=0). Functionally, involved in protein export. Acts as a chaperone by maintaining the newly synthesized protein in an open conformation. Functions as a peptidyl-prolyl cis-trans isomerase. This Macrococcus caseolyticus (strain JCSC5402) (Macrococcoides caseolyticum) protein is Trigger factor.